A 372-amino-acid polypeptide reads, in one-letter code: M protein, serotype 2.2 (372 aa).

Residues 1 to 41 form the signal peptide; it reads MARQQTKKNYSLRKLKTGTASVAVALTVLGAGFANQTEVRA. C repeat units follow at residues 124 to 158, 166 to 200, and 215 to 249; these read AKTT…EAKH, KKLT…EAKY, and QKLE…TSEL. Composition is skewed to basic and acidic residues over residues 125–169, 226–246, and 260–274; these read KTTK…KKLT, TSRK…KKVT, and EESK…AELQ. Disordered stretches follow at residues 125–191 and 211–274; these read KTTK…ASRA and EAKH…AELQ. D repeat units follow at residues 275–280, 281–286, 289–294, and 296–301; these read AKLDAQ, GKALKE, AKQTEE, and AKLRAE. A compositionally biased stretch (basic and acidic residues) spans 295-304; the sequence is LAKLRAEKAA. Residues 295–344 form a disordered region; the sequence is LAKLRAEKAAGSKTPATKPANKERSGRAAQTATRPSQNKGMRSQLPSTGE. The segment covering 322–341 has biased composition (polar residues); it reads AAQTATRPSQNKGMRSQLPS. The short motif at 339 to 343 is the LPXTG sorting signal element; it reads LPSTG. Position 342 is a pentaglycyl murein peptidoglycan amidated threonine (threonine 342). A propeptide spans 343–372 (removed by sortase); sequence GEAANPFFTAAAATVMVSAGMLALKRKEEN.

Belongs to the M protein family.

The protein localises to the secreted. It localises to the cell wall. Functionally, this protein is one of the different antigenic serotypes of protein M. Protein M is closely associated with virulence of the bacterium and can render the organism resistant to phagocytosis. The chain is M protein, serotype 2.2 (emmL2.2) from Streptococcus pyogenes.